The sequence spans 453 residues: Midnolin-A (453 aa).

The 75-residue stretch at 20–94 (MNLNIQSTTG…LTLLPSVEAG (75 aa)) folds into the Ubiquitin-like domain. 4 disordered regions span residues 184–219 (SHLASCTPGPTPPTTLSPTSSTHCNGPHSSPLTTSV), 232–256 (CAEQAPCSTRGTEGTSSSPSSRSRK), 333–376 (RNAK…ENRA), and 390–429 (QKRLRRKARRDSRAPYHWMPTRKSSRTSSNSSTSSGEGSL). The span at 206-219 (HCNGPHSSPLTTSV) shows a compositional bias: polar residues. Low complexity-rich tracts occupy residues 239-252 (STRGTEGTSSSPSS) and 338-351 (TSPQSTSPQQTTHP). The segment covering 365–376 (SGDRLRQTENRA) has biased composition (basic and acidic residues). The segment covering 390 to 399 (QKRLRRKARR) has biased composition (basic residues). Low complexity predominate over residues 415 to 428 (RTSSNSSTSSGEGS).

The protein resides in the nucleus. It localises to the cytoplasm. The protein localises to the cytosol. Its subcellular location is the nucleolus. In terms of biological role, facilitates ubiquitin-independent proteasomal degradation of polycomb protein CBX4. Plays a role in inhibiting the activity of glucokinase GCK and both glucose-induced and basal insulin secretion. This Xenopus laevis (African clawed frog) protein is Midnolin-A (midn-a).